A 460-amino-acid chain; its full sequence is uncharacterized protein (460 aa).

The TRAM domain maps to 9–67; the sequence is NFKKNDIFEAEVLDLTHEGQGVVKIDSFPFFVDNALPGERIKMHVLKVGKSFGFGRVDE. Residues glutamine 292, tyrosine 321, glutamate 342, and aspartate 390 each coordinate S-adenosyl-L-methionine. Cysteine 417 acts as the Nucleophile in catalysis.

The protein belongs to the class I-like SAM-binding methyltransferase superfamily. RNA M5U methyltransferase family.

This is an uncharacterized protein from Lactococcus lactis subsp. lactis (strain IL1403) (Streptococcus lactis).